The chain runs to 543 residues: Probable protein kinase UbiB (543 aa).

The Protein kinase domain maps to 123–501; that stretch reads DFDIVPLASA…KRQQAKGQFL (379 aa). Residues 129-137 and Lys152 each bind ATP; that span reads LASASIAQV. The Proton acceptor role is filled by Asp287. Residues 517 to 539 traverse the membrane as a helical segment; the sequence is TSNITALASISAATGVTFWLLSW.

This sequence belongs to the ABC1 family. UbiB subfamily.

It is found in the cell inner membrane. The protein operates within cofactor biosynthesis; ubiquinone biosynthesis [regulation]. In terms of biological role, is probably a protein kinase regulator of UbiI activity which is involved in aerobic coenzyme Q (ubiquinone) biosynthesis. The chain is Probable protein kinase UbiB from Aliivibrio salmonicida (strain LFI1238) (Vibrio salmonicida (strain LFI1238)).